The following is a 435-amino-acid chain: Methionine aminopeptidase 2 (435 aa).

The segment at 1–87 is disordered; it reads MAAQVADGVA…TQTKPPRVPV (87 aa). Over residues 10–19 the composition is skewed to basic and acidic residues; sequence ADLKLDDTKS. The span at 20–29 shows a compositional bias: polar residues; the sequence is KPTNGTTQNG. Positions 32-46 are enriched in acidic residues; it reads EHEDSDDDNEGEEGA. Residues 55–68 show a composition bias toward basic residues; that stretch reads KKKKKRKPRKKKKA. H199 lines the substrate pocket. 3 residues coordinate a divalent metal cation: D219, D230, and H299. H307 contributes to the substrate binding site. A divalent metal cation-binding residues include E332 and E427.

Belongs to the peptidase M24A family. Methionine aminopeptidase eukaryotic type 2 subfamily. The cofactor is Co(2+). Zn(2+) is required as a cofactor. It depends on Mn(2+) as a cofactor. Fe(2+) serves as cofactor.

The protein resides in the cytoplasm. It catalyses the reaction Release of N-terminal amino acids, preferentially methionine, from peptides and arylamides.. Functionally, cotranslationally removes the N-terminal methionine from nascent proteins. The N-terminal methionine is often cleaved when the second residue in the primary sequence is small and uncharged (Met-Ala-, Cys, Gly, Pro, Ser, Thr, or Val). The sequence is that of Methionine aminopeptidase 2 from Phaeosphaeria nodorum (strain SN15 / ATCC MYA-4574 / FGSC 10173) (Glume blotch fungus).